The following is a 754-amino-acid chain: Nibrin (754 aa).

The FHA domain occupies 24–83; it reads YVVGRKNCAILIEKDQSISRNHAVLTANFSVTNLSQTDEIPVLALKDNSKYGTFVNEEKM. BRCT domains follow at residues 105–181 and 224–315; these read KFRI…TEFL and GKTF…LAVI. The interval 111-328 is mediates interaction with SP100; sequence EPLVACSSCL…TKNYCDPQGH (218 aa). An interaction with MTOR, MAPKAP1 and RICTOR region spans residues 221–402; it reads IFKGKTFIFL…FRMLSQDAPT (182 aa). Ser-278 is subject to Phosphoserine; by ATM. The interval 326–346 is disordered; it reads QGHPSTGLKTTTPGPSLSQGL. Residues 328–346 show a composition bias toward polar residues; it reads HPSTGLKTTTPGPSLSQGL. Thr-337 is modified (phosphothreonine). The residue at position 343 (Ser-343) is a Phosphoserine; by ATM. At Ser-347 the chain carries Phosphoserine. Lys-388 carries the post-translational modification N6-lactoyllysine. Disordered stretches follow at residues 396-415 and 431-475; these read LSQD…NNNS and LSPT…NQEM. Position 397 is a phosphoserine (Ser-397). Thr-402 carries the post-translational modification Phosphothreonine. 2 stretches are compositionally biased toward polar residues: residues 431–440 and 447–462; these read LSPTKLPSIN and SQQQ…FQPS. Position 432 is a phosphoserine (Ser-432). A Glycyl lysine isopeptide (Lys-Gly) (interchain with G-Cter in ubiquitin) cross-link involves residue Lys-435. Residues 461 to 467 carry the Nuclear localization signal motif; it reads PSTKKRE. Phosphoserine is present on residues Ser-509 and Ser-518. Glycyl lysine isopeptide (Lys-Gly) (interchain with G-Cter in SUMO2) cross-links involve residues Lys-571 and Lys-582. A phosphoserine mark is found at Ser-615 and Ser-673. Glycyl lysine isopeptide (Lys-Gly) (interchain with G-Cter in ubiquitin) cross-links involve residues Lys-686, Lys-690, and Lys-735. A FxF/Y motif motif is present at residues 740–749; that stretch reads ADDLFRYNPY.

The protein belongs to the Nibrin family. In terms of assembly, component of the MRN complex composed of two heterodimers RAD50 and MRE11 associated with a single NBN. The MRN complexes dimerize on DNA to form joined MRN-MRN oligomers required for DNA double-strand break repair. The MRN complexes dimerize on DNA to form joined MRN-MRN oligomers required for DNA double-strand break repair. As part of the MRN complex, interacts with MCM9; the interaction recruits the complex to DNA repair sites. Component of the BASC complex, at least composed of BRCA1, MSH2, MSH6, MLH1, ATM, BLM, RAD50, MRE11 and NBN. Interacts with histone H2AX; this requires phosphorylation of H2AX on 'Ser-139' and promotes NBN recruitment to DNA damage sites. Interacts with (phosphorylated) MDC1; promoting NBN recruitment to DNA damage sites. Interacts with (phosphorylated) RAD17; promoting NBN recruitment to DNA damage sites. Interacts (via FxF/Y motif) with ATM. Interacts with HJURP. Interacts with INTS3. Interacts with KPNA2. Interacts with TERF2; interaction is disrupted upon NBN phosphorylation by CDK2. Interacts with (phosphorylated) RBBP8/CtIP; the interaction links the role of the MRN complex in DNA double-strand break sensing to resection. Interacts with SP100; recruits NBN to PML bodies. Interacts with ATF2. Interacts with MTOR, MAPKAP1 isoform 2 and RICTOR; indicative for an association with the mTORC2 complex. Interacts with MRNIP. Interacts with UFL1; promoting UFL1 recruitment to double-strand breaks following DNA damage. Interacts with CYREN (via XLF motif). In terms of processing, phosphorylated by ATM in response of ionizing radiation, and such phosphorylation is responsible intra-S phase checkpoint control and telomere maintenance. Phosphorylated at Ser-432 by CDK2 in S/G2 phases abolishes interaction with TERF2, enabling DCLRE1B/Apollo recruitment to telomeres. Phosphorylation at Ser-432 in response to dysfunctional telomeres promotes non-homologous end joining repair at telomeres, while dephosphorylation by PPP1CA promotes microhomology-mediated end-joining (MMEJ) repair. Post-translationally, ubiquitinated at Lys-435 via 'Lys-6'-linked ubiquitin chains by RNF8, promoting NBN recruitment to DNA double-strand breaks (DSBs). Ubiquitinated at Lys-686 and Lys-689 via 'Lys-63'-linked ubiquitin chains by PELI1: ubiquitination takes place following PELI1 phosphorylation and promotes ATM activation and DNA repair. Ubiquitinated at Lys-735 via 'Lys-63'-linked ubiquitin chains by the SCF(SKP2) complex: ubiquitination takes place following SKP2 phosphorylation and promotes ATM activation and DNA repair. Lactylation at Lys-388 by KAT5 in response to DNA damage promotes recruitment of the MRN complex to DNA damage sites. Delactylated by HDAC3.

It localises to the nucleus. It is found in the chromosome. Its subcellular location is the PML body. The protein resides in the telomere. Component of the MRN complex, which plays a central role in double-strand break (DSB) repair, DNA recombination, maintenance of telomere integrity and meiosis. The MRN complex is involved in the repair of DNA double-strand breaks (DSBs) via homologous recombination (HR), an error-free mechanism which primarily occurs during S and G2 phases. The complex (1) mediates the end resection of damaged DNA, which generates proper single-stranded DNA, a key initial steps in HR, and is (2) required for the recruitment of other repair factors and efficient activation of ATM and ATR upon DNA damage. The MRN complex possesses single-strand endonuclease activity and double-strand-specific 3'-5' exonuclease activity, which are provided by MRE11, to initiate end resection, which is required for single-strand invasion and recombination. Within the MRN complex, NBN acts as a protein-protein adapter, which specifically recognizes and binds phosphorylated proteins, promoting their recruitment to DNA damage sites. Recruits MRE11 and RAD50 components of the MRN complex to DSBs in response to DNA damage. Promotes the recruitment of PI3/PI4-kinase family members ATM, ATR, and probably DNA-PKcs to the DNA damage sites, activating their functions. Mediates the recruitment of phosphorylated RBBP8/CtIP to DSBs, leading to cooperation between the MRN complex and RBBP8/CtIP to initiate end resection. RBBP8/CtIP specifically promotes the endonuclease activity of the MRN complex to clear DNA ends containing protein adducts. The MRN complex is also required for the processing of R-loops. NBN also functions in telomere length maintenance via its interaction with TERF2: interaction with TERF2 during G1 phase preventing recruitment of DCLRE1B/Apollo to telomeres. NBN also promotes DNA repair choice at dysfunctional telomeres: NBN phosphorylation by CK2 promotes non-homologous end joining repair at telomeres, while unphosphorylated NBN promotes microhomology-mediated end-joining (MMEJ) repair. Enhances AKT1 phosphorylation possibly by association with the mTORC2 complex. This chain is Nibrin (NBN), found in Pongo abelii (Sumatran orangutan).